The sequence spans 885 residues: Alanine--tRNA ligase (885 aa).

Positions 571, 575, 674, and 678 each coordinate Zn(2+).

Belongs to the class-II aminoacyl-tRNA synthetase family. It depends on Zn(2+) as a cofactor.

The protein resides in the cytoplasm. It catalyses the reaction tRNA(Ala) + L-alanine + ATP = L-alanyl-tRNA(Ala) + AMP + diphosphate. In terms of biological role, catalyzes the attachment of alanine to tRNA(Ala) in a two-step reaction: alanine is first activated by ATP to form Ala-AMP and then transferred to the acceptor end of tRNA(Ala). Also edits incorrectly charged Ser-tRNA(Ala) and Gly-tRNA(Ala) via its editing domain. In Clavibacter michiganensis subsp. michiganensis (strain NCPPB 382), this protein is Alanine--tRNA ligase.